The sequence spans 367 residues: Leu/Ile/Val-binding protein BraC3 (367 aa).

The signal sequence occupies residues M1 to A22.

This sequence belongs to the leucine-binding protein family. In terms of assembly, the complex is composed of two ATP-binding proteins (BraF and BraG), two transmembrane proteins (BraD and BraE) and a solute-binding protein (BraC or BraC3).

It is found in the periplasm. Part of the ABC transporter complex BraDEFGC/C3 involved in transport of branched-chain amino acids Leu, Ile and Val (LIV). Essential for the development of bacteroids, the differentiated legume-symbiotic forms of this bacterium, and for the effective N(2) fixation by them. The chain is Leu/Ile/Val-binding protein BraC3 from Rhizobium johnstonii (strain DSM 114642 / LMG 32736 / 3841) (Rhizobium leguminosarum bv. viciae).